A 348-amino-acid polypeptide reads, in one-letter code: Ricin B-like lectin R40C1 (348 aa).

The tract at residues 1 to 26 is disordered; the sequence is MFGFGHHGHHGQDQPPQHHGGGGGGA. One can recognise a Ricin B-type lectin domain in the interval 199–345; it reads TVRIFCKADE…CEGDNQRWKI (147 aa).

Expressed in roots and shoots.

Lectin which binds carbohydrates in vitro. Interacts through its lectin domain with glycan structures containing specific motifs. The protein is Ricin B-like lectin R40C1 of Oryza sativa subsp. japonica (Rice).